The chain runs to 256 residues: Thiazole synthase (256 aa).

Catalysis depends on Lys95, which acts as the Schiff-base intermediate with DXP. 1-deoxy-D-xylulose 5-phosphate contacts are provided by residues Gly156, 182–183 (AG), and 204–205 (NT).

It belongs to the ThiG family. Homotetramer. Forms heterodimers with either ThiH or ThiS.

It localises to the cytoplasm. It catalyses the reaction [ThiS sulfur-carrier protein]-C-terminal-Gly-aminoethanethioate + 2-iminoacetate + 1-deoxy-D-xylulose 5-phosphate = [ThiS sulfur-carrier protein]-C-terminal Gly-Gly + 2-[(2R,5Z)-2-carboxy-4-methylthiazol-5(2H)-ylidene]ethyl phosphate + 2 H2O + H(+). The protein operates within cofactor biosynthesis; thiamine diphosphate biosynthesis. In terms of biological role, catalyzes the rearrangement of 1-deoxy-D-xylulose 5-phosphate (DXP) to produce the thiazole phosphate moiety of thiamine. Sulfur is provided by the thiocarboxylate moiety of the carrier protein ThiS. In vitro, sulfur can be provided by H(2)S. The polypeptide is Thiazole synthase (Escherichia coli O7:K1 (strain IAI39 / ExPEC)).